A 708-amino-acid polypeptide reads, in one-letter code: WD repeat-containing and planar cell polarity effector protein fritz homolog (708 aa).

WD repeat units lie at residues 303–342 (PLRS…TLLA) and 343–382 (QADL…IRAQ).

The protein belongs to the WD repeat fritz family. As to quaternary structure, interacts with sept2-a. Interacts with intu and fuz; fuz, intu and wdpcp probably form the core CPLANE (ciliogenesis and planar polarity effectors) complex.

The protein resides in the cell membrane. It localises to the cytoplasm. Its subcellular location is the cytoskeleton. It is found in the cilium axoneme. The protein localises to the cilium basal body. In terms of biological role, probable effector of the planar cell polarity signaling pathway which regulates the septin cytoskeleton in both ciliogenesis and collective cell movements including covergent extension during gastrulation. Controls cell shape but not polarization during convergent extension. Proposed to function as core component of the CPLANE (ciliogenesis and planar polarity effectors) complex involved in the recruitment of peripheral IFT-A proteins to basal bodies. The sequence is that of WD repeat-containing and planar cell polarity effector protein fritz homolog (wdpcp) from Xenopus laevis (African clawed frog).